Consider the following 198-residue polypeptide: Recombination protein RecR (198 aa).

A C4-type zinc finger spans residues 59 to 74 (CSLCCNYTDHDPCPIC). In terms of domain architecture, Toprim spans 82 to 175 (TLLCIVEQPR…KVTRIAHGLP (94 aa)).

This sequence belongs to the RecR family.

May play a role in DNA repair. It seems to be involved in an RecBC-independent recombinational process of DNA repair. It may act with RecF and RecO. This chain is Recombination protein RecR, found in Desulfitobacterium hafniense (strain Y51).